Reading from the N-terminus, the 570-residue chain is MRVSKYLLSTQKETPANAEVISHQLMLRAGMIRRNASGLYSYLPTGLRVLRKVEAIVREEMNKAGAIEILMPMVQPADLWVETGRWDKFGPELLRFKDRHNRDFVLGPTHEEVITDLIRKEVSSYKQLPLNLYQIQTKFRDEVRPRFGVMRSREFLMKDAYSFHLDVDTMNETYEAMYQAYSNILSRMGLAFRPVLADTGSIGGSMSHEFHVLAQSGEDLIAYSTGSDYAANIEKAESPMPTEARGAATEELRLVDTPNAKTIAELVEQFGLDITKTVKTLIVKGATEEAPLVALIVRGDHELNEIKADKLDLVASPLEFAPEALIRDAIGAGPGSLGPVGLNMPIIIDHSVSVMSDFAAGANQDDKHYFGINWERDLPLAQAADIRNVVEGEPTPDGLGTYAMARGIEVGHIFQLGTNYSKSMNATVLDENGKSQVLLMGCYGVGVSRIVAAAIEQNFDDRGIVWPEAIAPFSVGILPMNMHKSHRVTDIAEQLYKDLSAAGIDVLLDDRKERPGVMFADMELIGIPHTVVIGDRNIDAGVFEYKNRRTGEKQDVPFDQIVDFLKNLQA.

The protein belongs to the class-II aminoacyl-tRNA synthetase family. ProS type 1 subfamily. In terms of assembly, homodimer.

The protein localises to the cytoplasm. It carries out the reaction tRNA(Pro) + L-proline + ATP = L-prolyl-tRNA(Pro) + AMP + diphosphate. Catalyzes the attachment of proline to tRNA(Pro) in a two-step reaction: proline is first activated by ATP to form Pro-AMP and then transferred to the acceptor end of tRNA(Pro). As ProRS can inadvertently accommodate and process non-cognate amino acids such as alanine and cysteine, to avoid such errors it has two additional distinct editing activities against alanine. One activity is designated as 'pretransfer' editing and involves the tRNA(Pro)-independent hydrolysis of activated Ala-AMP. The other activity is designated 'posttransfer' editing and involves deacylation of mischarged Ala-tRNA(Pro). The misacylated Cys-tRNA(Pro) is not edited by ProRS. This chain is Proline--tRNA ligase, found in Shewanella sp. (strain MR-4).